Consider the following 554-residue polypeptide: Solute carrier family 22 member 1 (554 aa).

The Cytoplasmic segment spans residues 1-21 (MPTVDDVLEQVGEFGWFQKRT). Residues 22-42 (FLFLCLISAILAPIYLGIVFL) traverse the membrane as a helical segment. Residues 43–149 (GFTPDHRCRS…LVCADAWKVD (107 aa)) lie on the Extracellular side of the membrane. N-linked (GlcNAc...) asparagine glycosylation occurs at asparagine 71. Residues 150–170 (LFQSCVNLGFFLGSLGVGYIA) traverse the membrane as a helical segment. At 171–176 (DRFGRK) the chain is on the cytoplasmic side. Residues 177–197 (LCLLLTTLINAVSGVLTAVAP) form a helical membrane-spanning segment. Residues 198–206 (DYTSMLLFR) are Extracellular-facing. The helical transmembrane segment at 207–229 (LLQGLVSKGSWMSGYTLITEFVG) threads the bilayer. Over 230-237 (SGYRRTVA) the chain is Cytoplasmic. A helical transmembrane segment spans residues 238-258 (ILYQVAFSVGLVALSGVAYAI). At 259–262 (PNWR) the chain is on the extracellular side. Residues 263–283 (WLQLTVSLPTFLCLFYYWCVP) traverse the membrane as a helical segment. The short motif at 283–287 (PESPR) is the Proline-rich sequence element. The Cytoplasmic portion of the chain corresponds to 284 to 347 (ESPRWLLSQK…FRTPNLRKHT (64 aa)). Serine 333 is subject to Phosphoserine. The helical transmembrane segment at 348 to 368 (FILMFLWFTCSVLYQGLILHM) threads the bilayer. Residues 369 to 374 (GATGGN) are Extracellular-facing. A helical membrane pass occupies residues 375–395 (VYLDFFYSSLVEFPAAFVILV). The Cytoplasmic segment spans residues 396-402 (TIDRVGR). The chain crosses the membrane as a helical span at residues 403-423 (IYPMAASNLAAGVASVILIFV). The Extracellular portion of the chain corresponds to 424-431 (PQDLHWLT). The chain crosses the membrane as a helical span at residues 432–452 (IVLSCVGRMGATIVLQMICLV). Residues 453–464 (NAELYPTFVRNL) are Cytoplasmic-facing. Residues 465-485 (GVMVCSALCDVGGIITPFMVF) form a helical membrane-spanning segment. At 486 to 492 (RLMEVWQ) the chain is on the extracellular side. A helical transmembrane segment spans residues 493–513 (PLPLIVFGVLGLLAGGMTLLL). Topologically, residues 514–554 (PETKGVALPETIEDAENLRRKAKPKESKIYLQVQTSELKGP) are cytoplasmic.

It belongs to the major facilitator (TC 2.A.1) superfamily. Organic cation transporter (TC 2.A.1.19) family. Post-translationally, phosphorylated. In terms of tissue distribution, expressed in kidney, liver and intestine.

The protein localises to the basolateral cell membrane. It localises to the apical cell membrane. Its subcellular location is the lateral cell membrane. It is found in the basal cell membrane. It carries out the reaction 1-methylnicotinamide(out) = 1-methylnicotinamide(in). The catalysed reaction is dopamine(out) = dopamine(in). The enzyme catalyses serotonin(out) = serotonin(in). It catalyses the reaction (R)-adrenaline(out) = (R)-adrenaline(in). It carries out the reaction (R)-noradrenaline(out) = (R)-noradrenaline(in). The catalysed reaction is histamine(out) = histamine(in). The enzyme catalyses guanidine(out) = guanidine(in). It catalyses the reaction choline(out) = choline(in). It carries out the reaction acetylcholine(in) = acetylcholine(out). The catalysed reaction is thiamine(in) = thiamine(out). The enzyme catalyses spermidine(in) = spermidine(out). It catalyses the reaction agmatine(out) = agmatine(in). It carries out the reaction putrescine(out) = putrescine(in). The catalysed reaction is (R)-carnitine(in) = (R)-carnitine(out). The enzyme catalyses O-isobutanoyl-(R)-carnitine(in) = O-isobutanoyl-(R)-carnitine(out). It catalyses the reaction O-acetyl-(R)-carnitine(in) = O-acetyl-(R)-carnitine(out). It carries out the reaction O-3-hydroxybutanoyl-(R)-carnitine(in) = O-3-hydroxybutanoyl-(R)-carnitine(out). The catalysed reaction is O-propanoyl-(R)-carnitine(in) = O-propanoyl-(R)-carnitine(out). The enzyme catalyses O-butanoyl-(R)-carnitine(in) = O-butanoyl-(R)-carnitine(out). It catalyses the reaction O-2-methylbutanoyl-(R)-carnitine(in) = O-2-methylbutanoyl-(R)-carnitine(out). It carries out the reaction O-3-methylbutanoyl-(R)-carnitine(in) = O-3-methylbutanoyl-(R)-carnitine(out). The catalysed reaction is O-hexanoyl-(R)-carnitine(in) = O-hexanoyl-(R)-carnitine(out). The enzyme catalyses L-histidyl-L-proline diketopiperazine(in) = L-histidyl-L-proline diketopiperazine(out). It catalyses the reaction (R)-salsolinol(in) = (R)-salsolinol(out). It carries out the reaction prostaglandin F2alpha(out) = prostaglandin F2alpha(in). The catalysed reaction is prostaglandin E2(out) = prostaglandin E2(in). Its activity is regulated as follows. Phosphorylation of the transporter leads to changes in its substrate affinity, resulting in a regulation of the transport activity. In contrast with rat ortholog, ASP uptake is inhibited by protein kinase A (PKA) and C (PKC) activation. ASP uptake is also endogenously activated by calmodulin, the calmodulin-dependent kinase II and LCK tyrosine kinase. Inhibited by cGMP, most likely through a cGMP-binding protein that interacts with OCT1. In terms of biological role, electrogenic voltage-dependent transporter that mediates the transport of a variety of organic cations such as endogenous bioactive amines, cationic drugs and xenobiotics. Functions as a pH- and Na(+)-independent, bidirectional transporter. Cation cellular uptake or release is driven by the electrochemical potential (i.e. membrane potential and concentration gradient) and substrate selectivity. Hydrophobicity is a major requirement for recognition in polyvalent substrates and inhibitors. Primarily expressed in the basolateral membrane of hepatocytes and proximal tubules and involved in the uptake and disposition of cationic compounds from the blood by hepatic and renal clearance. Most likely functions as an uptake carrier in enterocytes contributing to the intestinal elimination of organic cations from the systemic circulation. Transports endogenous monoamines such as N-1-methylnicotinamide (NMN), guanidine, neurotransmitters dopamine, serotonin, noradrenaline, adrenaline and histamine, and quaternary ammonium compound such as choline. Also transports natural polyamines such as spermidine, agmatine and putrescine at low affinity, but relatively high turnover. Involved in the hepatic and intestinal uptake of the vitamin B1/thiamine, hence regulating hepatic lipid and energy metabolism. Contributes to the influx and efflux of fatty acid carriers carnitines and acylcarnitines across the basolateral membrane of hepatocytes, from the liver to the systemic circulation and inversely and may be involved in regulating the systemic availability of hepatic acylcarnitines. Also capable of transporting non-amine endogenous compounds such as prostaglandin E2 (PGE2) and prostaglandin F2-alpha (PGF2-alpha). May contribute to the transport of cationic compounds in testes across the blood-testis-barrier. Also mediates the uptake of xenobiotics tributylmethylammonium (TBuMA), quinidine, N-methyl-quinine (NMQ), N-methyl-quinidine (NMQD) N-(4,4-azo-n-pentyl)-quinuclidine (APQ), azidoprocainamide methoiodide (AMP), N-(4,4-azo-n-pentyl)-21-deoxyajmalinium (APDA) and 4-(4-(dimethylamino)styryl)-N-methylpyridinium (ASP). The protein is Solute carrier family 22 member 1 (SLC22A1) of Oryctolagus cuniculus (Rabbit).